A 207-amino-acid chain; its full sequence is MSYSLPSLPYAYDALEPHFDKQTMEIHHTKHHQTYVNNANTVLESFPELAKFSVEDLIKDLDKVPAEKRTFMRNNAGGHANHSLFWKGLKLGTTLTGDLKAAIERDFGSVDSFKEKFEAAAATRFGSGWAWLVLKDDGKLAVVSTANQDSPLMGEAVSGASGFPIVGLDVWEHAYYLKFQNRRPDYIKAFWNVVNWDEAAARFAQAK.

Mn(2+)-binding residues include His-27, His-82, Asp-169, and His-173.

This sequence belongs to the iron/manganese superoxide dismutase family. The cofactor is Mn(2+).

The catalysed reaction is 2 superoxide + 2 H(+) = H2O2 + O2. Its function is as follows. Destroys superoxide anion radicals which are normally produced within the cells and which are toxic to biological systems. The protein is Superoxide dismutase [Mn] (sodA) of Yersinia enterocolitica.